Consider the following 392-residue polypeptide: SH3 domain-binding protein 5-like (392 aa).

The interval Met1 to Asp57 is disordered. Position 13 is a phosphothreonine (Thr13). The span at Leu18–Pro28 shows a compositional bias: basic and acidic residues. A phosphoserine mark is found at Ser30 and Ser49. Coiled-coil stretches lie at residues Arg59–Ala140 and Trp169–His272. A disordered region spans residues Arg275 to Leu332. Residues Glu317–Leu332 are compositionally biased toward low complexity. Ser342, Ser349, Ser357, Ser361, and Ser377 each carry phosphoserine. Positions Gly364–Leu392 are disordered. The segment covering Gly383–Leu392 has biased composition (basic residues).

It belongs to the SH3BP5 family.

Functionally, functions as a guanine nucleotide exchange factor (GEF) for RAB11A. The polypeptide is SH3 domain-binding protein 5-like (Sh3bp5l) (Mus musculus (Mouse)).